Here is a 496-residue protein sequence, read N- to C-terminus: Maturase K (496 aa).

This sequence belongs to the intron maturase 2 family. MatK subfamily.

Its subcellular location is the plastid. It is found in the chloroplast. Its function is as follows. Usually encoded in the trnK tRNA gene intron. Probably assists in splicing its own and other chloroplast group II introns. The sequence is that of Maturase K from Paeonia peregrina (Common peony).